Consider the following 221-residue polypeptide: Large ribosomal subunit protein uL16x (221 aa).

This sequence belongs to the universal ribosomal protein uL16 family. Component of the small ribosomal subunit. Mature ribosomes consist of a small (40S) and a large (60S) subunit. The 40S subunit contains about 33 different proteins and 1 molecule of RNA (18S). The 60S subunit contains about 49 different proteins and 3 molecules of RNA (25S, 5.8S and 5S).

This Arabidopsis thaliana (Mouse-ear cress) protein is Large ribosomal subunit protein uL16x (RPL10C).